A 281-amino-acid chain; its full sequence is Probable endonuclease 4 (281 aa).

Zn(2+) contacts are provided by H69, H109, E145, D179, H182, H216, D229, H231, and E261.

This sequence belongs to the AP endonuclease 2 family. Requires Zn(2+) as cofactor.

It carries out the reaction Endonucleolytic cleavage to 5'-phosphooligonucleotide end-products.. In terms of biological role, endonuclease IV plays a role in DNA repair. It cleaves phosphodiester bonds at apurinic or apyrimidinic (AP) sites, generating a 3'-hydroxyl group and a 5'-terminal sugar phosphate. The chain is Probable endonuclease 4 from Chlorobaculum tepidum (strain ATCC 49652 / DSM 12025 / NBRC 103806 / TLS) (Chlorobium tepidum).